Here is a 234-residue protein sequence, read N- to C-terminus: MDIKLKDFEGPLDLLLHLVSQYKVDIYEVPIVEVIEQYLNYIETLQVMKLEVAGDYMLMASQLMLIKSRRLLPKVVEHIEEEDLEQDLLEKIEEYSRFKAVSQALAKQHDQRAKWYSKPKQELIFEDAILQEDKTVMDLFLAFSNIMAAKRAVLKNNHTVIERDDYKIEDMMASIKQRLEKESVISLSAIFEECQTLNEVISIFLASLELIKLHVVFVEQLSNFGAIILRKEKK.

The protein belongs to the ScpA family. In terms of assembly, component of a cohesin-like complex composed of ScpA, ScpB and the Smc homodimer, in which ScpA and ScpB bind to the head domain of Smc. The presence of the three proteins is required for the association of the complex with DNA.

Its subcellular location is the cytoplasm. Its function is as follows. Participates in chromosomal partition during cell division. May act via the formation of a condensin-like complex containing Smc and ScpB that pull DNA away from mid-cell into both cell halves. The sequence is that of Segregation and condensation protein A from Streptococcus pyogenes serotype M6 (strain ATCC BAA-946 / MGAS10394).